We begin with the raw amino-acid sequence, 191 residues long: Octanoyltransferase (191 aa).

Positions 10–185 (ENSHDEIWLV…NILALLNNPP (176 aa)) constitute a BPL/LPL catalytic domain. Residues 49–56 (RGGQVTYH), 116–118 (SLG), and 129–131 (GLA) contribute to the substrate site. The active-site Acyl-thioester intermediate is the C147.

Belongs to the LipB family.

It is found in the cytoplasm. It catalyses the reaction octanoyl-[ACP] + L-lysyl-[protein] = N(6)-octanoyl-L-lysyl-[protein] + holo-[ACP] + H(+). It participates in protein modification; protein lipoylation via endogenous pathway; protein N(6)-(lipoyl)lysine from octanoyl-[acyl-carrier-protein]: step 1/2. Catalyzes the transfer of endogenously produced octanoic acid from octanoyl-acyl-carrier-protein onto the lipoyl domains of lipoate-dependent enzymes. Lipoyl-ACP can also act as a substrate although octanoyl-ACP is likely to be the physiological substrate. In Salmonella choleraesuis (strain SC-B67), this protein is Octanoyltransferase.